Consider the following 311-residue polypeptide: Malate dehydrogenase (311 aa).

NAD(+) contacts are provided by residues Gly-7–Gly-13 and Asp-34. Positions 81 and 87 each coordinate substrate. Residues Asn-94 and Ile-117 to Asn-119 each bind NAD(+). Substrate contacts are provided by Asn-119 and Arg-153. His-177 acts as the Proton acceptor in catalysis. NAD(+) is bound at residue Met-227.

The protein belongs to the LDH/MDH superfamily. MDH type 1 family. Homodimer.

The enzyme catalyses (S)-malate + NAD(+) = oxaloacetate + NADH + H(+). Its function is as follows. Catalyzes the reversible oxidation of malate to oxaloacetate. This is Malate dehydrogenase from Shewanella sp. (strain MR-4).